The following is an 872-amino-acid chain: Leucine--tRNA ligase (872 aa).

The 'HIGH' region signature appears at 42 to 52 (PYPSGKLHMGH). Positions 632 to 636 (KMSKS) match the 'KMSKS' region motif. Residue K635 participates in ATP binding.

It belongs to the class-I aminoacyl-tRNA synthetase family.

The protein localises to the cytoplasm. It catalyses the reaction tRNA(Leu) + L-leucine + ATP = L-leucyl-tRNA(Leu) + AMP + diphosphate. This Chromobacterium violaceum (strain ATCC 12472 / DSM 30191 / JCM 1249 / CCUG 213 / NBRC 12614 / NCIMB 9131 / NCTC 9757 / MK) protein is Leucine--tRNA ligase.